The primary structure comprises 194 residues: Inner membrane-spanning protein YciB (194 aa).

5 consecutive transmembrane segments (helical) span residues 3–23 (LFIEYFPLLIFFIINSIAGIY), 47–67 (IPAKQWIIFGLIVVFGGLTIY), 76–96 (WKVTIINAFFAAALLVSNTFF), 119–139 (LNLAWALFFLFCSGLNYYIAF), and 149–169 (FKVFGLTGLMFLFSITSILFL).

The protein belongs to the YciB family.

It is found in the cell inner membrane. In terms of biological role, plays a role in cell envelope biogenesis, maintenance of cell envelope integrity and membrane homeostasis. The chain is Inner membrane-spanning protein YciB from Colwellia psychrerythraea (strain 34H / ATCC BAA-681) (Vibrio psychroerythus).